A 415-amino-acid polypeptide reads, in one-letter code: Serine hydroxymethyltransferase 2 (415 aa).

(6S)-5,6,7,8-tetrahydrofolate contacts are provided by residues Leu121 and 125 to 127; that span reads GHL. At Lys229 the chain carries N6-(pyridoxal phosphate)lysine.

The protein belongs to the SHMT family. In terms of assembly, homodimer. Pyridoxal 5'-phosphate serves as cofactor.

The protein resides in the cytoplasm. It carries out the reaction (6R)-5,10-methylene-5,6,7,8-tetrahydrofolate + glycine + H2O = (6S)-5,6,7,8-tetrahydrofolate + L-serine. It functions in the pathway one-carbon metabolism; tetrahydrofolate interconversion. The protein operates within amino-acid biosynthesis; glycine biosynthesis; glycine from L-serine: step 1/1. Functionally, catalyzes the reversible interconversion of serine and glycine with tetrahydrofolate (THF) serving as the one-carbon carrier. This reaction serves as the major source of one-carbon groups required for the biosynthesis of purines, thymidylate, methionine, and other important biomolecules. Also exhibits THF-independent aldolase activity toward beta-hydroxyamino acids, producing glycine and aldehydes, via a retro-aldol mechanism. The chain is Serine hydroxymethyltransferase 2 from Bordetella parapertussis (strain 12822 / ATCC BAA-587 / NCTC 13253).